The following is a 78-amino-acid chain: Large ribosomal subunit protein bL28 (78 aa).

The protein belongs to the bacterial ribosomal protein bL28 family.

The polypeptide is Large ribosomal subunit protein bL28 (Proteus mirabilis (strain HI4320)).